The primary structure comprises 591 residues: Metalloendopeptidase OPG085 (591 aa).

Histidine 41 contributes to the Zn(2+) binding site. Residue glutamate 44 is part of the active site. Zn(2+)-binding residues include histidine 45 and glutamate 112.

The protein belongs to the peptidase M44 family. The cofactor is Zn(2+). Undergoes proteolytic processing during the course of infection. May be cleaved into 46 kDa and 22 kDa products (Potential).

The protein resides in the virion. Probably involved in maturation of some viral proteins by processing them preferentially at Ala-Gly-|-Ser/Thr/Lys motifs. Does not seem to be responsible for the cleavage of major core proteins. The chain is Metalloendopeptidase OPG085 (OPG085) from Variola virus (isolate Human/India/Ind3/1967) (VARV).